The sequence spans 629 residues: tRNA uridine 5-carboxymethylaminomethyl modification enzyme MnmG (629 aa).

An FAD-binding site is contributed by 13-18; sequence GGGHAG. Residue 273 to 287 participates in NAD(+) binding; that stretch reads GPRYCPSIEDKIMRF.

This sequence belongs to the MnmG family. Homodimer. Heterotetramer of two MnmE and two MnmG subunits. FAD serves as cofactor.

It localises to the cytoplasm. In terms of biological role, NAD-binding protein involved in the addition of a carboxymethylaminomethyl (cmnm) group at the wobble position (U34) of certain tRNAs, forming tRNA-cmnm(5)s(2)U34. This is tRNA uridine 5-carboxymethylaminomethyl modification enzyme MnmG from Tolumonas auensis (strain DSM 9187 / NBRC 110442 / TA 4).